The following is a 126-amino-acid chain: Nascent polypeptide-associated complex protein (126 aa).

Residues 10–77 (PRMMKQMQKM…AKKVAKEEEK (68 aa)) enclose the NAC-A/B domain.

It belongs to the NAC-alpha family. As to quaternary structure, homodimer. Interacts with the ribosome. Binds ribosomal RNA.

Functionally, contacts the emerging nascent chain on the ribosome. This chain is Nascent polypeptide-associated complex protein, found in Methanococcus maripaludis (strain C7 / ATCC BAA-1331).